A 107-amino-acid chain; its full sequence is uncharacterized protein (107 aa).

The first 18 residues, 1–18 (MRTLMLIILSILIYLSSA), serve as a signal peptide directing secretion.

This is an uncharacterized protein from Caenorhabditis elegans.